Reading from the N-terminus, the 1113-residue chain is Receptor-type guanylate cyclase gcy-18 (1113 aa).

The first 18 residues, 1-18, serve as a signal peptide directing secretion; it reads MLKTLLFILIFFNIPIIA. The Extracellular portion of the chain corresponds to 19-499; that stretch reads IEEIPDIKEN…RGQRCSYLLE (481 aa). N-linked (GlcNAc...) asparagine glycosylation is found at asparagine 72, asparagine 369, and asparagine 456. Residues 500–520 form a helical membrane-spanning segment; that stretch reads ISVGSLIILLILISVVFFFLF. Over 521-1113 the chain is Cytoplasmic; the sequence is RYCENKQLEK…TNYIQNVEGV (593 aa). Residues 543–848 form the Protein kinase domain; sequence IDEEQVKSMM…RVRLNTEMVL (306 aa). A coiled-coil region spans residues 853 to 884; sequence SLVDQMMKMMEQYANNLEKLVAERTGMLEEAN. A Guanylate cyclase domain is found at 918-1048; it reads TILFSDIVGF…DTVNVSSRME (131 aa). Mg(2+) is bound by residues aspartate 923, isoleucine 924, and aspartate 967.

The protein belongs to the adenylyl cyclase class-4/guanylyl cyclase family. As to expression, expressed specifically in AFD sensory neurons.

It is found in the cell membrane. The protein localises to the cell projection. Its subcellular location is the cilium. The enzyme catalyses GTP = 3',5'-cyclic GMP + diphosphate. Functionally, guanylate cyclase involved in the production of the second messenger cGMP. Regulates thermotaxis responses in AFD sensory neurons. May regulate AFD neuronal activity such as calcium responses to temperature gradients. This chain is Receptor-type guanylate cyclase gcy-18, found in Caenorhabditis elegans.